The primary structure comprises 84 residues: Dolichol phosphate-mannose biosynthesis regulatory protein (84 aa).

The next 2 helical transmembrane spans lie at 11–31 (LGLVAVSLIIFTYYTAWVILL) and 49–69 (YAVAIPLAAGLLLLLFVGLFI).

This sequence belongs to the DPM2 family. In terms of assembly, component of the dolichol-phosphate mannose (DPM) synthase complex composed of DPM1, DPM2 and DPM3; in the complex interacts directly with DPM3. Component of the glycosylphosphatidylinositol-N-acetylglucosaminyltransferase (GPI-GnT) complex composed at least by PIGA, PIGC, PIGH, PIGP, PIGQ, PIGY and DPM2. Interacts with PIGA, PIGC and PIGQ.

It is found in the endoplasmic reticulum membrane. It functions in the pathway protein modification; protein glycosylation. In terms of biological role, regulates the biosynthesis of dolichol phosphate-mannose. Regulatory subunit of the dolichol-phosphate mannose (DPM) synthase complex; essential for the ER localization and stable expression of DPM1. Part of the glycosylphosphatidylinositol-N-acetylglucosaminyltransferase (GPI-GnT) complex that catalyzes the transfer of N-acetylglucosamine from UDP-N-acetylglucosamine to phosphatidylinositol and participates in the first step of GPI biosynthesis. May act by regulating the GPI-GNT complex. This Homo sapiens (Human) protein is Dolichol phosphate-mannose biosynthesis regulatory protein.